A 387-amino-acid chain; its full sequence is Protein spaetzle 5 (387 aa).

Residues 1-29 form the signal peptide; the sequence is MTKSIKRPPPFSCKQVLLTYVILAYTVAA. Residues 30-284 constitute a propeptide that is removed on maturation; that stretch reads HSSPPPCGLY…PLKKRSRTKR (255 aa). Residues 133 to 197 form a disordered region; the sequence is QTPFGGNPQR…SGGHLYINQS (65 aa). 2 N-linked (GlcNAc...) asparagine glycosylation sites follow: Asn-195 and Asn-204. Disordered stretches follow at residues 219–256 and 269–291; these read KQRQPDEVQAEVVEPVNEQTEEAEEQDNPAEDHPQSKR and GVEAPNPLKKRSRTKRQSPGRST. Acidic residues predominate over residues 237 to 247; that stretch reads QTEEAEEQDNP. The segment covering 276 to 286 has biased composition (basic residues); it reads LKKRSRTKRQS. In terms of domain architecture, Spaetzle spans 291-384; the sequence is TLCQTTSQFI…WFPSCCVCTI (94 aa). Cystine bridges form between Cys-293–Cys-350, Cys-331–Cys-380, and Cys-340–Cys-382.

In terms of assembly, homodimer; disulfide-linked. In terms of tissue distribution, detected in the fan-shaped body which is a component of the locomotion center in the central nervous system (CNS) (at protein level).

In terms of biological role, neurotrophin which may function as a ligand for the Toll-related receptors Toll-6 and Toll-7. Binds to Toll-7 and Toll-6, and probably acts as their ligands in the promotion of motor axon targeting and neuronal survival in the central nervous system (CNS). Involved in synaptic targeting of ISNb/d motorneurons and also some SNa motorneurons. May be involved in the normal development of specific neurons at the neuromuscular junction. In Drosophila melanogaster (Fruit fly), this protein is Protein spaetzle 5.